The following is a 313-amino-acid chain: Trimeric intracellular cation channel type 1B.2 (313 aa).

The Lumenal portion of the chain corresponds to 1–28 (MGWVPDEWSIDHDTLIDAGGYVQKLKLY). The chain crosses the membrane as a helical span at residues 29-48 (PYFDAAHYVLTCLSVRHDLG). Over 49–57 (PDAISFSRK) the chain is Cytoplasmic. The discontinuously helical transmembrane segment at 58 to 82 (HPFSCWLSCMLMSFAGSFLSCFLLG) threads the bilayer. Topologically, residues 83-90 (EPIISPLK) are lumenal. Residues 91 to 108 (QHADILLGSIVWYLVFYS) form a helical membrane-spanning segment. The Cytoplasmic segment spans residues 109–118 (PFDVVFRLAT). A helical membrane pass occupies residues 119–149 (WFPVKLGLSVLKEVQRTHKIAAGVKHAVRIY). Lys130 and Arg134 together coordinate a 1,2-diacyl-sn-glycero-3-phospho-(1D-myo-inositol-4,5-bisphosphate). Topologically, residues 150–151 (PE) are lumenal. The discontinuously helical transmembrane segment at 152–178 (SYLVQILVGVAKGAGSGVVKIVEQLAR) threads the bilayer. A 1,2-diacyl-sn-glycero-3-phospho-(1D-myo-inositol-4,5-bisphosphate) is bound at residue Gly168. The Cytoplasmic segment spans residues 179-192 (GTWHPTNHEILRPS). The chain crosses the membrane as a helical span at residues 193–210 (FTTKACVIASIVFTLERH). Over 211 to 216 (SMYVTA) the chain is Lumenal. The helical transmembrane segment at 217 to 239 (PHDLVYLCVVGFFIYFKLASLCL) threads the bilayer. Topologically, residues 240 to 313 (SVHDVLMPIE…MSNGTDKKNN (74 aa)) are cytoplasmic.

This sequence belongs to the TMEM38 family. As to quaternary structure, homotrimer; trimerization probably requires binding to phosphatidylinositol 4,5-bisphosphate (PIP2).

The protein resides in the endoplasmic reticulum membrane. Functionally, potassium channel that mediates transmembrane potassium transport. Might be required for maintenance of rapid intracellular calcium release. May act as a potassium counter-ion channel that functions in synchronization with calcium release from intracellular stores. Binds phosphatidylinositol 4,5-bisphosphate (PIP2). The polypeptide is Trimeric intracellular cation channel type 1B.2 (Caenorhabditis elegans).